Reading from the N-terminus, the 666-residue chain is tRNA 5-methylaminomethyl-2-thiouridine biosynthesis bifunctional protein MnmC (666 aa).

The tract at residues 1–245 (MKQYAIQPAT…KREMLCGVME (245 aa)) is tRNA (mnm(5)s(2)U34)-methyltransferase. Positions 270 to 666 (IGGGIASALL…RKLLKGKAVK (397 aa)) are FAD-dependent cmnm(5)s(2)U34 oxidoreductase.

The protein in the N-terminal section; belongs to the methyltransferase superfamily. tRNA (mnm(5)s(2)U34)-methyltransferase family. In the C-terminal section; belongs to the DAO family. It depends on FAD as a cofactor.

Its subcellular location is the cytoplasm. It carries out the reaction 5-aminomethyl-2-thiouridine(34) in tRNA + S-adenosyl-L-methionine = 5-methylaminomethyl-2-thiouridine(34) in tRNA + S-adenosyl-L-homocysteine + H(+). Its function is as follows. Catalyzes the last two steps in the biosynthesis of 5-methylaminomethyl-2-thiouridine (mnm(5)s(2)U) at the wobble position (U34) in tRNA. Catalyzes the FAD-dependent demodification of cmnm(5)s(2)U34 to nm(5)s(2)U34, followed by the transfer of a methyl group from S-adenosyl-L-methionine to nm(5)s(2)U34, to form mnm(5)s(2)U34. The protein is tRNA 5-methylaminomethyl-2-thiouridine biosynthesis bifunctional protein MnmC of Salmonella paratyphi A (strain ATCC 9150 / SARB42).